A 156-amino-acid chain; its full sequence is Small ribosomal subunit protein uS7 (156 aa).

This sequence belongs to the universal ribosomal protein uS7 family. In terms of assembly, part of the 30S ribosomal subunit. Contacts proteins S9 and S11.

One of the primary rRNA binding proteins, it binds directly to 16S rRNA where it nucleates assembly of the head domain of the 30S subunit. Is located at the subunit interface close to the decoding center, probably blocks exit of the E-site tRNA. This Rhizobium meliloti (strain 1021) (Ensifer meliloti) protein is Small ribosomal subunit protein uS7.